The chain runs to 326 residues: Tagatose 1,6-diphosphate aldolase (326 aa).

This sequence belongs to the aldolase LacD family.

The catalysed reaction is D-tagatofuranose 1,6-bisphosphate = D-glyceraldehyde 3-phosphate + dihydroxyacetone phosphate. It participates in carbohydrate metabolism; D-tagatose 6-phosphate degradation; D-glyceraldehyde 3-phosphate and glycerone phosphate from D-tagatose 6-phosphate: step 2/2. The chain is Tagatose 1,6-diphosphate aldolase from Staphylococcus aureus (strain MW2).